The following is a 488-amino-acid chain: Malonate-semialdehyde dehydrogenase 1 (488 aa).

NAD(+) contacts are provided by Phe-156, Lys-180, Glu-183, Arg-184, Ser-233, and Ser-255. Cys-288 functions as the Nucleophile in the catalytic mechanism. An NAD(+)-binding site is contributed by Glu-387.

This sequence belongs to the aldehyde dehydrogenase family. IolA subfamily. As to quaternary structure, homotetramer.

It catalyses the reaction 3-oxopropanoate + NAD(+) + CoA + H2O = hydrogencarbonate + acetyl-CoA + NADH + H(+). The enzyme catalyses 2-methyl-3-oxopropanoate + NAD(+) + CoA + H2O = propanoyl-CoA + hydrogencarbonate + NADH + H(+). Its pathway is polyol metabolism; myo-inositol degradation into acetyl-CoA; acetyl-CoA from myo-inositol: step 7/7. Its function is as follows. Catalyzes the oxidation of malonate semialdehyde (MSA) and methylmalonate semialdehyde (MMSA) into acetyl-CoA and propanoyl-CoA, respectively. Is involved in a myo-inositol catabolic pathway. Bicarbonate, and not CO2, is the end-product of the enzymatic reaction. This chain is Malonate-semialdehyde dehydrogenase 1, found in Geobacillus kaustophilus (strain HTA426).